The following is an 873-amino-acid chain: DNA helicase/primase complex-associated protein (873 aa).

The interval P394–D422 is disordered.

It belongs to the herpesviridae HEPA family. As to quaternary structure, associates with the primase and the helicase to form the helicase-primase complex. Interacts with the origin-binding protein. Interacts with the polymerase catalytic subunit.

The protein resides in the host nucleus. In terms of biological role, component of the helicase/primase complex. Unwinds the DNA at the replication forks and generates single-stranded DNA for both leading and lagging strand synthesis. The primase synthesizes short RNA primers on the lagging strand that the polymerase presumably elongates using dNTPs. The primase-associated factor has no known catalytic activity in the complex and may serve to facilitate the formation of the replisome by directly interacting with the origin-binding protein and the polymerase. The chain is DNA helicase/primase complex-associated protein (UL102) from Homo sapiens (Human).